The chain runs to 302 residues: Ribosomal RNA small subunit methyltransferase A (302 aa).

The S-adenosyl-L-methionine site is built by Asn27, Leu29, Gly54, Glu75, Asp100, and Asn138.

The protein belongs to the class I-like SAM-binding methyltransferase superfamily. rRNA adenine N(6)-methyltransferase family. RsmA subfamily.

The protein resides in the cytoplasm. The catalysed reaction is adenosine(1518)/adenosine(1519) in 16S rRNA + 4 S-adenosyl-L-methionine = N(6)-dimethyladenosine(1518)/N(6)-dimethyladenosine(1519) in 16S rRNA + 4 S-adenosyl-L-homocysteine + 4 H(+). In terms of biological role, specifically dimethylates two adjacent adenosines (A1518 and A1519) in the loop of a conserved hairpin near the 3'-end of 16S rRNA in the 30S particle. May play a critical role in biogenesis of 30S subunits. The polypeptide is Ribosomal RNA small subunit methyltransferase A (Natranaerobius thermophilus (strain ATCC BAA-1301 / DSM 18059 / JW/NM-WN-LF)).